Consider the following 351-residue polypeptide: UDP-3-O-acylglucosamine N-acyltransferase 1 (351 aa).

His237 serves as the catalytic Proton acceptor.

This sequence belongs to the transferase hexapeptide repeat family. LpxD subfamily. As to quaternary structure, homotrimer.

It catalyses the reaction a UDP-3-O-[(3R)-3-hydroxyacyl]-alpha-D-glucosamine + a (3R)-hydroxyacyl-[ACP] = a UDP-2-N,3-O-bis[(3R)-3-hydroxyacyl]-alpha-D-glucosamine + holo-[ACP] + H(+). It functions in the pathway bacterial outer membrane biogenesis; LPS lipid A biosynthesis. In terms of biological role, catalyzes the N-acylation of UDP-3-O-acylglucosamine using 3-hydroxyacyl-ACP as the acyl donor. Is involved in the biosynthesis of lipid A, a phosphorylated glycolipid that anchors the lipopolysaccharide to the outer membrane of the cell. The chain is UDP-3-O-acylglucosamine N-acyltransferase 1 from Legionella pneumophila (strain Paris).